The primary structure comprises 201 residues: Large ribosomal subunit protein eL15 (201 aa).

The protein belongs to the eukaryotic ribosomal protein eL15 family.

In Quercus suber (Cork oak), this protein is Large ribosomal subunit protein eL15 (RPL15).